Reading from the N-terminus, the 305-residue chain is Oxygen-dependent coproporphyrinogen-III oxidase (305 aa).

A substrate-binding site is contributed by serine 98. Residues histidine 102 and histidine 112 each coordinate a divalent metal cation. The active-site Proton donor is histidine 112. Residue 114-116 coordinates substrate; the sequence is NVR. Residues histidine 151 and histidine 181 each coordinate a divalent metal cation. An important for dimerization region spans residues 246-281; the sequence is YVEFNLVYDRGTLFGLQSGGRTESILMSMPPLARWE. 264-266 contacts substrate; sequence GGR.

It belongs to the aerobic coproporphyrinogen-III oxidase family. As to quaternary structure, homodimer. A divalent metal cation serves as cofactor.

Its subcellular location is the cytoplasm. It catalyses the reaction coproporphyrinogen III + O2 + 2 H(+) = protoporphyrinogen IX + 2 CO2 + 2 H2O. It participates in porphyrin-containing compound metabolism; protoporphyrin-IX biosynthesis; protoporphyrinogen-IX from coproporphyrinogen-III (O2 route): step 1/1. Functionally, involved in the heme biosynthesis. Catalyzes the aerobic oxidative decarboxylation of propionate groups of rings A and B of coproporphyrinogen-III to yield the vinyl groups in protoporphyrinogen-IX. This Vibrio atlanticus (strain LGP32) (Vibrio splendidus (strain Mel32)) protein is Oxygen-dependent coproporphyrinogen-III oxidase.